Reading from the N-terminus, the 650-residue chain is MAFIWRRRSTTIVKLVAFALAIWFCIAFLVYTDDTRRRAAQEGAGASGAGSAPGVGGGAGGLGDPIALALRNEPAGEDFGINGNVIGGGGQKQAHDEADIPPTVGKHKADLQAERMRKKAAEQPKKKPQEDSKKVIDPPANFEENPGELGKPVRLPKEMSDEMKKAVDDGWTKNAFNQYVSDLISVHRTLPDPRDAWCKDEARYLTNLPKTDVIICFHNEAWTVLLRTVHSVLDRSPEHLIGKIILVDDYSDMPHLKRQLEDYFAAYPKVQIIRGQKREGLIRARILGANHAKSPVLTYLDSHCECTEGWLEPLLDRIARNSTTVVCPVIDVISDETLEYHYRDSGGVNVGGFDWNLQFSWHPVPERERKRHNSTAEPVYSPTMAGGLFSIDREFFDRLGTYDSGFDIWGGENLELSFKTWMCGGTLEIVPCSHVGHIFRKRSPYKWRSGVNVLKKNSVRLAEVWMDEYSQYYYHRIGNDKGDWGDVSDRRKLRNDLKCKSFKWYLDNIYPELFIPGDSVAHGEIRNLGYGGRTCLDAPAGKKHQKKAVGTYPCHRQGGNQYWMLSKAGEIRRDDSCLDYAGKDVTLFGCHGGKGNQFWTYRENTKQLHHGTSGKCLAISESKDKLLMEECSASLSRQQWTLENYDSSKL.

Topologically, residues Met-1–Thr-11 are cytoplasmic. Residues Ile-12–Tyr-31 form a helical; Signal-anchor for type II membrane protein membrane-spanning segment. Residues Thr-32 to Leu-650 lie on the Lumenal side of the membrane. Positions Asn-84–Arg-154 are disordered. Residues His-107–Ile-136 show a composition bias toward basic and acidic residues. 5 disulfide bridges follow: Cys-198-Cys-432, Cys-423-Cys-499, Cys-535-Cys-554, Cys-577-Cys-590, and Cys-616-Cys-631. Residues Leu-208–Arg-317 form a catalytic subdomain A region. Residues Cys-216, Asp-249, and Arg-278 each contribute to the substrate site. Position 301 (Asp-301) interacts with Mn(2+). Substrate is bound by residues Ser-302 and His-303. His-303 is a binding site for Mn(2+). N-linked (GlcNAc...) asparagine glycosylation is found at Asn-321 and Asn-373. The tract at residues Pro-378–Arg-440 is catalytic subdomain B. His-437 is a binding site for Mn(2+). Arg-440 and Tyr-445 together coordinate substrate. A Ricin B-type lectin domain is found at Ala-521–Glu-643.

Belongs to the glycosyltransferase 2 family. GalNAc-T subfamily. Isoform A forms homotetramer. Isoform B forms homodimer. Mn(2+) serves as cofactor.

It is found in the golgi apparatus membrane. The catalysed reaction is L-seryl-[protein] + UDP-N-acetyl-alpha-D-galactosamine = a 3-O-[N-acetyl-alpha-D-galactosaminyl]-L-seryl-[protein] + UDP + H(+). It catalyses the reaction L-threonyl-[protein] + UDP-N-acetyl-alpha-D-galactosamine = a 3-O-[N-acetyl-alpha-D-galactosaminyl]-L-threonyl-[protein] + UDP + H(+). The protein operates within protein modification; protein glycosylation. Catalyzes the initial reaction in O-linked oligosaccharide biosynthesis, the transfer of an N-acetyl-D-galactosamine residue to a serine or threonine residue on the protein receptor. It can both act as a peptide transferase that transfers GalNAc onto unmodified peptide substrates, and as a glycopeptide transferase that requires the prior addition of a GalNAc on a peptide before adding additional GalNAc moieties. Functionally, N-acetylgalactosaminyltransferase which preferentially O-glycosylates negatively charge substrates. O-glycosylates mucin-like protein Sgs3 in the salivary gland but to a lesser extent than isoform B. By regulating the O-glycosylation of secretory cargo proteins plays a role in the morphology and maturation of salivary gland secretory granules. In terms of biological role, N-acetylgalactosaminyltransferase which preferentially O-glycosylates positively charge substrates. O-glycosylates mucin-like protein Sgs3 in the salivary gland. By regulating the O-glycosylation of secretory cargo proteins, plays a role in the morphology and maturation of salivary gland secretory granules. This chain is Putative polypeptide N-acetylgalactosaminyltransferase 9, found in Drosophila melanogaster (Fruit fly).